The chain runs to 304 residues: Ribosomal RNA small subunit methyltransferase H (304 aa).

Residues 36–38, D53, F79, D98, and Q105 each bind S-adenosyl-L-methionine; that span reads GGH.

The protein belongs to the methyltransferase superfamily. RsmH family.

Its subcellular location is the cytoplasm. The catalysed reaction is cytidine(1402) in 16S rRNA + S-adenosyl-L-methionine = N(4)-methylcytidine(1402) in 16S rRNA + S-adenosyl-L-homocysteine + H(+). In terms of biological role, specifically methylates the N4 position of cytidine in position 1402 (C1402) of 16S rRNA. The protein is Ribosomal RNA small subunit methyltransferase H of Myxococcus xanthus (strain DK1622).